The chain runs to 311 residues: Catabolite control protein B (311 aa).

Positions 1 to 56 constitute an HTH lacI-type domain; sequence MANIKEIARLANVSVSTVSRVLNHHPYVSEEKRKLVHQVMKELDYTPNRTAIDLIR. Residues 4–23 constitute a DNA-binding region (H-T-H motif); sequence IKEIARLANVSVSTVSRVLN.

As to quaternary structure, seems to be complexed to phosphorylated HPr.

Functionally, transcriptional regulator involved in catabolite repression of several operons. The chain is Catabolite control protein B (ccpB) from Bacillus subtilis (strain 168).